Consider the following 208-residue polypeptide: dITP/XTP pyrophosphatase (208 aa).

17-22 (SNNPGK) provides a ligand contact to substrate. Aspartate 49 and aspartate 78 together coordinate Mg(2+). Catalysis depends on aspartate 78, which acts as the Proton acceptor. Substrate contacts are provided by residues serine 79, 164–167 (FGYD), lysine 187, and 192–193 (HR).

The protein belongs to the HAM1 NTPase family. As to quaternary structure, homodimer. Mg(2+) is required as a cofactor.

The catalysed reaction is XTP + H2O = XMP + diphosphate + H(+). It carries out the reaction dITP + H2O = dIMP + diphosphate + H(+). It catalyses the reaction ITP + H2O = IMP + diphosphate + H(+). Functionally, pyrophosphatase that catalyzes the hydrolysis of nucleoside triphosphates to their monophosphate derivatives, with a high preference for the non-canonical purine nucleotides XTP (xanthosine triphosphate), dITP (deoxyinosine triphosphate) and ITP. Seems to function as a house-cleaning enzyme that removes non-canonical purine nucleotides from the nucleotide pool, thus preventing their incorporation into DNA/RNA and avoiding chromosomal lesions. This Burkholderia pseudomallei (strain K96243) protein is dITP/XTP pyrophosphatase.